The chain runs to 323 residues: L-lactate dehydrogenase (323 aa).

Residues Val18, Asp39, Tyr69, and 83–84 (GA) contribute to the NAD(+) site. Gln86 and Arg92 together coordinate substrate. NAD(+) contacts are provided by residues Ser105, 122–124 (VAN), and Ser147. Residue 124–127 (NPVD) coordinates substrate. 152-155 (DTGR) provides a ligand contact to substrate. The active-site Proton acceptor is His179. Tyr223 carries the phosphotyrosine modification. Substrate is bound at residue Thr232.

Belongs to the LDH/MDH superfamily. LDH family. Homotetramer.

The protein resides in the cytoplasm. It carries out the reaction (S)-lactate + NAD(+) = pyruvate + NADH + H(+). It functions in the pathway fermentation; pyruvate fermentation to lactate; (S)-lactate from pyruvate: step 1/1. With respect to regulation, under neutral conditions, the reaction is stimulated 4-fold by fructose 1,6-bisphosphate (FBP), however the L-lactate dehydrogenase is a nonallosteric enzyme. Calcium and zinc ions at 1 mM stimulate the activity almost 2-fold. Weakly inhibited by cadmium, cobalt and copper ions. Its function is as follows. Catalyzes the conversion of lactate to pyruvate. The protein is L-lactate dehydrogenase of Lactobacillus helveticus (Lactobacillus suntoryeus).